A 432-amino-acid polypeptide reads, in one-letter code: Adenylosuccinate synthetase (432 aa).

GTP is bound by residues 12-18 (GDEGKGK) and 40-42 (GHT). Catalysis depends on D13, which acts as the Proton acceptor. Residues D13 and G40 each contribute to the Mg(2+) site. IMP contacts are provided by residues 13–16 (DEGK), 38–41 (NAGH), T130, R144, Q225, T240, and R304. The active-site Proton donor is the H41. A substrate-binding site is contributed by 300-306 (STTGRPR). GTP contacts are provided by residues R306, 332 to 334 (KLD), and 414 to 416 (SVG).

The protein belongs to the adenylosuccinate synthetase family. As to quaternary structure, homodimer. Mg(2+) is required as a cofactor.

It localises to the cytoplasm. The enzyme catalyses IMP + L-aspartate + GTP = N(6)-(1,2-dicarboxyethyl)-AMP + GDP + phosphate + 2 H(+). Its pathway is purine metabolism; AMP biosynthesis via de novo pathway; AMP from IMP: step 1/2. Plays an important role in the de novo pathway of purine nucleotide biosynthesis. Catalyzes the first committed step in the biosynthesis of AMP from IMP. The chain is Adenylosuccinate synthetase from Citrifermentans bemidjiense (strain ATCC BAA-1014 / DSM 16622 / JCM 12645 / Bem) (Geobacter bemidjiensis).